The following is a 324-amino-acid chain: Probable acrylyl-CoA reductase AcuI (324 aa).

NADP(+)-binding positions include Y41, 156–159 (SGGV), 178–180 (SGR), R198, L242, I256, S267, and N313.

This sequence belongs to the zinc-containing alcohol dehydrogenase family. Acrylyl-CoA reductase subfamily. Homodimer.

It localises to the cytoplasm. The enzyme catalyses propanoyl-CoA + NADP(+) = acryloyl-CoA + NADPH + H(+). Functionally, probably catalyzes the NADPH-dependent reduction of acrylyl-CoA to propanoyl-CoA. This chain is Probable acrylyl-CoA reductase AcuI (acuI), found in Escherichia coli (strain K12).